We begin with the raw amino-acid sequence, 101 residues long: Small ribosomal subunit protein uS14 (101 aa).

The protein belongs to the universal ribosomal protein uS14 family. In terms of assembly, part of the 30S ribosomal subunit. Contacts proteins S3 and S10.

Its function is as follows. Binds 16S rRNA, required for the assembly of 30S particles and may also be responsible for determining the conformation of the 16S rRNA at the A site. The sequence is that of Small ribosomal subunit protein uS14 from Acinetobacter baumannii (strain SDF).